Here is a 78-residue protein sequence, read N- to C-terminus: Apolipoprotein C-I (78 aa).

The first 26 residues, 1-26 (MRLILWLPVLVVVLLMVLEGPAPAQG), serve as a signal peptide directing secretion.

It belongs to the apolipoprotein C1 family.

It is found in the secreted. In terms of biological role, inhibitor of lipoprotein binding to the low density lipoprotein (LDL) receptor, LDL receptor-related protein, and very low density lipoprotein (VLDL) receptor. Associates with high density lipoproteins (HDL) and the triacylglycerol-rich lipoproteins in the plasma and makes up about 10% of the protein of the VLDL and 2% of that of HDL. Appears to interfere directly with fatty acid uptake and is also the major plasma inhibitor of cholesteryl ester transfer protein (CETP). Binds free fatty acids and reduces their intracellular esterification. Modulates the interaction of APOE with beta-migrating VLDL and inhibits binding of beta-VLDL to the LDL receptor-related protein. This Puma concolor (Mountain lion) protein is Apolipoprotein C-I (APOC1).